The chain runs to 321 residues: HPr kinase/phosphorylase (321 aa).

Catalysis depends on residues histidine 143 and lysine 164. An ATP-binding site is contributed by 158 to 165 (GKSGVGKS). Residue serine 165 coordinates Mg(2+). The active-site Proton acceptor; for phosphorylation activity. Proton donor; for dephosphorylation activity is aspartate 182. Positions 206-215 (MEIRGLGILN) are important for the catalytic mechanism of both phosphorylation and dephosphorylation. Position 207 (glutamate 207) interacts with Mg(2+). Arginine 248 is an active-site residue. The tract at residues 269-274 (PVRPGR) is important for the catalytic mechanism of dephosphorylation.

This sequence belongs to the HPrK/P family. As to quaternary structure, homohexamer. Mg(2+) is required as a cofactor.

The enzyme catalyses [HPr protein]-L-serine + ATP = [HPr protein]-O-phospho-L-serine + ADP + H(+). It catalyses the reaction [HPr protein]-O-phospho-L-serine + phosphate + H(+) = [HPr protein]-L-serine + diphosphate. Catalyzes the ATP- as well as the pyrophosphate-dependent phosphorylation of a specific serine residue in HPr, a phosphocarrier protein of the phosphoenolpyruvate-dependent sugar phosphotransferase system (PTS). HprK/P also catalyzes the pyrophosphate-producing, inorganic phosphate-dependent dephosphorylation (phosphorolysis) of seryl-phosphorylated HPr (P-Ser-HPr). The protein is HPr kinase/phosphorylase of Leptospira interrogans serogroup Icterohaemorrhagiae serovar copenhageni (strain Fiocruz L1-130).